Consider the following 593-residue polypeptide: DNA primase (593 aa).

Residues 38 to 62 (CPFHQEKTPSFTVSDSKRFFYCFGC) form a CHC2-type zinc finger. A Toprim domain is found at 250–332 (NRSILVEGYF…EKKISFIRLP (83 aa)). Positions 256, 300, and 302 each coordinate Mg(2+).

This sequence belongs to the DnaG primase family. In terms of assembly, monomer. Interacts with DnaB. The cofactor is Zn(2+). Mg(2+) is required as a cofactor.

The catalysed reaction is ssDNA + n NTP = ssDNA/pppN(pN)n-1 hybrid + (n-1) diphosphate.. Its function is as follows. RNA polymerase that catalyzes the synthesis of short RNA molecules used as primers for DNA polymerase during DNA replication. The polypeptide is DNA primase (Rickettsia typhi (strain ATCC VR-144 / Wilmington)).